The primary structure comprises 498 residues: Myocyte-specific enhancer factor 2D homolog (498 aa).

An interaction with hdac9 region spans residues 1 to 100 (MGRKKIQIQR…KGFNGCDSPE (100 aa)). Residues 3–57 (RKKIQIQRITDERNRQVTFTKRKFGLMKKAYELSVLCDCEIALIIFNHSNKLFQY) enclose the MADS-box domain. The segment at residues 58–86 (ASTDMDKVLLKYTEYNEPHESRTNADIIE) is a DNA-binding region (mef2-type). Disordered regions lie at residues 173–215 (LTDP…NSNG), 243–267 (LGKVIQAKSPPSPNQNSQLGANSRK), and 411–498 (SIKR…AWVT). Over residues 412–424 (IKREPASPNRERS) the composition is skewed to basic and acidic residues. 2 stretches are compositionally biased toward polar residues: residues 425–434 (TGTPLSCFSH) and 447–457 (DSLSSNASSFE).

It belongs to the MEF2 family. As to quaternary structure, binds DNA as a multimer, probably as a dimer. Interacts with hdac9. As to expression, restricted to the somitic mesoderm of early embryos and to the body muscle (myotomes) of the tadpole. Expressed in all tissues examined in the adult.

The protein resides in the nucleus. In terms of biological role, may regulate muscle-specific transcription in the embryo and may regulate transcription of a variety of cell types in the adult. It binds to the sequence 5'-CTA[TA]4TAR-3'. The polypeptide is Myocyte-specific enhancer factor 2D homolog (mef2d) (Xenopus laevis (African clawed frog)).